The sequence spans 62 residues: Large ribosomal subunit protein eL24 (62 aa).

Zn(2+)-binding residues include Cys7, Cys10, Cys33, and Cys37. The C4-type zinc-finger motif lies at Cys7–Cys37.

It belongs to the eukaryotic ribosomal protein eL24 family. Part of the 50S ribosomal subunit. Forms a cluster with proteins L3 and L14. The cofactor is Zn(2+).

Binds to the 23S rRNA. This chain is Large ribosomal subunit protein eL24, found in Halobacterium salinarum (strain ATCC 29341 / DSM 671 / R1).